Reading from the N-terminus, the 349-residue chain is GDSL esterase/lipase At1g58725 (349 aa).

The first 19 residues, 1–19 (MKIQILLFALVLIFVEANA), serve as a signal peptide directing secretion. Asn25 carries N-linked (GlcNAc...) asparagine glycosylation. Residue Ser37 is the Nucleophile of the active site. N-linked (GlcNAc...) asparagine glycosylation occurs at Asn316. Catalysis depends on residues Asp324 and His327.

It belongs to the 'GDSL' lipolytic enzyme family.

The protein resides in the secreted. This chain is GDSL esterase/lipase At1g58725, found in Arabidopsis thaliana (Mouse-ear cress).